The chain runs to 77 residues: MAVEIIVDREKCIGCGRCYDVCPKGPLIWTKDENGKYYAYDVEYCHNCKFCAGRCPTNAILIKVVKPKKKDENKNKK.

4Fe-4S ferredoxin-type domains lie at 3–32 and 36–65; these read VEII…WTKD and KYYA…IKVV. Residues cysteine 12, cysteine 15, cysteine 18, cysteine 22, cysteine 45, cysteine 48, cysteine 51, and cysteine 55 each contribute to the [4Fe-4S] cluster site.

Requires [4Fe-4S] cluster as cofactor.

Its function is as follows. Ferredoxins are iron-sulfur proteins that transfer electrons probably in the CO-dehydrogenase complex. This is an uncharacterized protein from Methanocaldococcus jannaschii (strain ATCC 43067 / DSM 2661 / JAL-1 / JCM 10045 / NBRC 100440) (Methanococcus jannaschii).